The primary structure comprises 245 residues: MQRWKLTLEYDGRPFVGWQRQDNGPSVQQALEEAIYRFTQETVTVFCAGRTDAGVHALAMVASVDLAREATADKVQAALNFHLKPHPVAVLRVEPVAPDFHARFSCLGRAYLYRILNRRAPAALEAGRVWHVQGGLDAEAMHEAAQRLVGQHDFSSFRASLCQAKSPVKTLSDLSVARVGEEVRIVARARSFLHHQVRNMVGTLKLVGEGRWTADDVSRALAARNRSAAGPTAPAAGLYFTEAWY.

The Nucleophile role is filled by Asp52. Residue Tyr111 participates in substrate binding.

Belongs to the tRNA pseudouridine synthase TruA family. As to quaternary structure, homodimer.

The enzyme catalyses uridine(38/39/40) in tRNA = pseudouridine(38/39/40) in tRNA. Its function is as follows. Formation of pseudouridine at positions 38, 39 and 40 in the anticodon stem and loop of transfer RNAs. The sequence is that of tRNA pseudouridine synthase A from Rhodospirillum centenum (strain ATCC 51521 / SW).